Consider the following 781-residue polypeptide: Ubiquitin carboxyl-terminal hydrolase 14 (781 aa).

The segment at 169 to 279 (STCPHTENFQ…SALQIYGINI (111 aa)) adopts a UBP-type zinc-finger fold. The Zn(2+) site is built by cysteine 171, histidine 173, cysteine 192, cysteine 195, cysteine 204, cysteine 207, cysteine 212, histidine 224, histidine 228, histidine 235, cysteine 253, and cysteine 256. The region spanning 323-781 (CGLINLGNSC…NGYIYFYTRC (459 aa)) is the USP domain. The active-site Nucleophile is the cysteine 332. UBA domains are found at residues 576–626 (DEDE…LFQH) and 649–689 (EVDE…VFNN). Histidine 737 (proton acceptor) is an active-site residue.

Belongs to the peptidase C19 family.

It localises to the cytoplasm. The protein localises to the nucleus. It catalyses the reaction Thiol-dependent hydrolysis of ester, thioester, amide, peptide and isopeptide bonds formed by the C-terminal Gly of ubiquitin (a 76-residue protein attached to proteins as an intracellular targeting signal).. Functionally, required for the adaptation to the presence of glucose in the growth medium; mediates the degradation of enzymes involved in gluconeogenesis when cells are shifted to glucose-containing medium. Required for proteasome-dependent catabolite degradation of fructose-1,6-bisphosphatase (FBP1). Accelerates proteasomal breakdown of ubiquitinated proteins as it disassembles free ubiquitin chains that would compete with ubiquitinated proteins to bind to the proteasome. The sequence is that of Ubiquitin carboxyl-terminal hydrolase 14 (UBP14) from Saccharomyces cerevisiae (strain ATCC 204508 / S288c) (Baker's yeast).